A 320-amino-acid polypeptide reads, in one-letter code: Myoblast determination protein 1 (320 aa).

Met-1 participates in a covalent cross-link: Peptide (Met-Gly) (interchain with G-Cter in ubiquitin). Position 104 is an N6-methyllysine; by EHMT2 (Lys-104). Residues Asp-109–Leu-160 enclose the bHLH domain. Disordered stretches follow at residues Ala-174 to Gly-219 and Glu-262 to Leu-320. Polar residues-rich tracts occupy residues Ser-197–Ser-207 and Gly-291–Pro-301.

In terms of assembly, efficient DNA binding requires dimerization with another bHLH protein. Seems to form active heterodimers with ITF-2. Interacts with SUV39H1. Interacts with DDX5. Interacts with CHD2. Interacts with TSC22D3. Interacts with SETD3. Interacts with P-TEFB complex; promotes the transcriptional activity of MYOD1 through its CDK9-mediated phosphorylation. Interacts with CSRP3. Interacts with NUPR1. Phosphorylated by CDK9. This phosphorylation promotes its function in muscle differentiation. In terms of processing, acetylated by a complex containing EP300 and PCAF. The acetylation is essential to activate target genes. Conversely, its deacetylation by SIRT1 inhibits its function. Post-translationally, ubiquitinated on the N-terminus; which is required for proteasomal degradation. Methylation at Lys-104 by EHMT2/G9a inhibits myogenic activity.

It is found in the nucleus. Its function is as follows. Acts as a transcriptional activator that promotes transcription of muscle-specific target genes and plays a role in muscle differentiation. Together with MYF5 and MYOG, co-occupies muscle-specific gene promoter core region during myogenesis. Induces fibroblasts to differentiate into myoblasts. Interacts with and is inhibited by the twist protein. This interaction probably involves the basic domains of both proteins. This chain is Myoblast determination protein 1 (MYOD1), found in Homo sapiens (Human).